The following is a 100-amino-acid chain: Large ribosomal subunit protein uL23 (100 aa).

This sequence belongs to the universal ribosomal protein uL23 family. Part of the 50S ribosomal subunit. Contacts protein L29, and trigger factor when it is bound to the ribosome.

Its function is as follows. One of the early assembly proteins it binds 23S rRNA. One of the proteins that surrounds the polypeptide exit tunnel on the outside of the ribosome. Forms the main docking site for trigger factor binding to the ribosome. The polypeptide is Large ribosomal subunit protein uL23 (Kosmotoga olearia (strain ATCC BAA-1733 / DSM 21960 / TBF 19.5.1)).